The primary structure comprises 121 residues: Small ribosomal subunit protein uS13 (121 aa).

The tract at residues 91-121 (HRRGLPVRGQKTKNNARTRKGPVKTVANKKK) is disordered.

It belongs to the universal ribosomal protein uS13 family. As to quaternary structure, part of the 30S ribosomal subunit. Forms a loose heterodimer with protein S19. Forms two bridges to the 50S subunit in the 70S ribosome.

Located at the top of the head of the 30S subunit, it contacts several helices of the 16S rRNA. In the 70S ribosome it contacts the 23S rRNA (bridge B1a) and protein L5 of the 50S subunit (bridge B1b), connecting the 2 subunits; these bridges are implicated in subunit movement. Contacts the tRNAs in the A and P-sites. The sequence is that of Small ribosomal subunit protein uS13 from Staphylococcus carnosus (strain TM300).